Here is a 336-residue protein sequence, read N- to C-terminus: MNLKPAIFAVVIGTTDVSLIPGITVAGATPELTHYTPALDVEYLLTGRPITLDVVPVTPDGIPTPALVTRAVAFDVPKLVVNAGARVRPRVPYVDLGGEPGGDIRRGPAMSCAAAEELASRGRMLGRELGRLGVVYLGESIPGGTTTAMAILVGLGYNAWGRTSSASPNNPKELKAQVVMDALERAKPPPDPLRVVCELGDPVHPALAAIALGVAEAGGVPVLAGGTQMAAAAAIYKAMGGDLAKLHVVTTRWIVEDKSADFLGLMAEVGVKNVHVATASFGESKYEGLRAYERGAVKEGVGMGGALFYAQSMGRDVLKLVEAEYERVWRYVKRGD.

It belongs to the UPF0284 family.

This is UPF0284 protein Pcal_1534 from Pyrobaculum calidifontis (strain DSM 21063 / JCM 11548 / VA1).